We begin with the raw amino-acid sequence, 417 residues long: D-amino acid dehydrogenase (417 aa).

Residue 3–17 (AVVLGSGVVGLMSAW) participates in FAD binding.

The protein belongs to the DadA oxidoreductase family. It depends on FAD as a cofactor.

It carries out the reaction a D-alpha-amino acid + A + H2O = a 2-oxocarboxylate + AH2 + NH4(+). In terms of biological role, oxidative deamination of D-amino acids. In Vibrio vulnificus (strain YJ016), this protein is D-amino acid dehydrogenase.